Consider the following 56-residue polypeptide: Trypsin inhibitor 1 (56 aa).

Positions 1 to 25 are cleaved as a signal peptide; it reads MATTMAKLITLVVLAILAFVEVSVS. The propeptide occupies 26 to 39; the sequence is GYKTSISTITIEDN. A cross-link (cyclopeptide (Gly-Asp)) is located at residues 40 to 53; the sequence is GRCTKSIPPICFPD. C42 and C50 are disulfide-bonded. Residues 54–56 constitute a propeptide that is removed on maturation; sequence GRP.

Post-translationally, this is a cyclic peptide.

Functionally, inhibits trypsin, cathepsin G, elastase, chymotrypsin and thrombin. Does not inhibit factor Xa. In Helianthus annuus (Common sunflower), this protein is Trypsin inhibitor 1.